The chain runs to 294 residues: Putative S-adenosyl-L-methionine-dependent methyltransferase RHA1_ro00605 (294 aa).

Residues Asp-120 and 149–150 (DL) contribute to the S-adenosyl-L-methionine site.

It belongs to the UPF0677 family.

In terms of biological role, exhibits S-adenosyl-L-methionine-dependent methyltransferase activity. This Rhodococcus jostii (strain RHA1) protein is Putative S-adenosyl-L-methionine-dependent methyltransferase RHA1_ro00605.